The chain runs to 210 residues: Peptidyl-tRNA hydrolase (210 aa).

Tyrosine 14 contributes to the tRNA binding site. The active-site Proton acceptor is histidine 19. Residues phenylalanine 64, asparagine 66, and asparagine 112 each contribute to the tRNA site.

Belongs to the PTH family. In terms of assembly, monomer.

Its subcellular location is the cytoplasm. The enzyme catalyses an N-acyl-L-alpha-aminoacyl-tRNA + H2O = an N-acyl-L-amino acid + a tRNA + H(+). Hydrolyzes ribosome-free peptidyl-tRNAs (with 1 or more amino acids incorporated), which drop off the ribosome during protein synthesis, or as a result of ribosome stalling. Functionally, catalyzes the release of premature peptidyl moieties from peptidyl-tRNA molecules trapped in stalled 50S ribosomal subunits, and thus maintains levels of free tRNAs and 50S ribosomes. This is Peptidyl-tRNA hydrolase from Methylorubrum populi (strain ATCC BAA-705 / NCIMB 13946 / BJ001) (Methylobacterium populi).